The chain runs to 87 residues: RNA-binding protein Hfq (87 aa).

Positions 9-68 (DPFLNALRRERIPVSIYLVNGIKLQGQIESFDQFVILLKNTVSQMVYKHAISTVVPARAV) constitute a Sm domain.

It belongs to the Hfq family. In terms of assembly, homohexamer.

Functionally, RNA chaperone that binds small regulatory RNA (sRNAs) and mRNAs to facilitate mRNA translational regulation in response to envelope stress, environmental stress and changes in metabolite concentrations. Also binds with high specificity to tRNAs. The polypeptide is RNA-binding protein Hfq (Aeromonas salmonicida (strain A449)).